A 303-amino-acid chain; its full sequence is MKRARIIYNPTSGREIFKKHLAQVLQKFEQAGYETSTHATTCAGDATHAAKEAALREFDLIIAAGGDGTINEVVNGLAPLDNRPTLGVIPVGTTNDFARALGIPREDILKAADTVINGVARPIDIGQVNGQYFINIAGGGRLTELTYDVPSKLKTMLGQLAYYLKGMEMLPSLRPTEVEIEYDGKLFQGEIMLFLVTLTNSVGGFEKLAPDSSLNDGMFDLMILKKANLAEFIRVATMALRGEHINDQHIIYTKANRVKVNVSEKMQLNLDGEYGGMLPGEFVNLYRHIHVVMPKEKAEQLDD.

The 132-residue stretch at 1-132 (MKRARIIYNP…IDIGQVNGQY (132 aa)) folds into the DAGKc domain. Residues 9 to 13 (NPTSG), Thr40, 66 to 72 (GDGTINE), and Thr93 contribute to the ATP site. Residues Ser213, Asp216, and Met218 each coordinate Mg(2+). The Proton acceptor role is filled by Glu273.

Belongs to the diacylglycerol/lipid kinase family. Mg(2+) is required as a cofactor.

The enzyme catalyses a 1,2-diacyl-sn-glycerol + ATP = a 1,2-diacyl-sn-glycero-3-phosphate + ADP + H(+). The catalysed reaction is 1,2-di-(9Z-octadecenoyl)-sn-glycerol + ATP = 1,2-di-(9Z-octadecenoyl)-sn-glycero-3-phosphate + ADP + H(+). Its function is as follows. Catalyzes the phosphorylation of diacylglycerol (DAG) into phosphatidic acid. Is a key enzyme involved in the production of lipoteichoic acid by reintroducing DAG formed from the breakdown of membrane phospholipids into the phosphatidylglycerol biosynthetic pathway. Is more active toward long-chain DAG compared with short-chain DAG. Is not able to phosphorylate substrates other than DAG, such as monoacylglycerol, ceramide, undecaprenol, phosphatidylinositol, or sphingosine. This chain is Diacylglycerol kinase (dagK), found in Bacillus subtilis (strain 168).